We begin with the raw amino-acid sequence, 321 residues long: Glucokinase (321 aa).

8–13 (GDVGGT) provides a ligand contact to ATP.

This sequence belongs to the bacterial glucokinase family.

The protein resides in the cytoplasm. It carries out the reaction D-glucose + ATP = D-glucose 6-phosphate + ADP + H(+). This is Glucokinase from Escherichia coli (strain SMS-3-5 / SECEC).